Reading from the N-terminus, the 809-residue chain is Protein TRC8 homolog (809 aa).

A run of 11 helical transmembrane segments spans residues 124–144, 147–167, 200–220, 233–253, 256–276, 350–370, 392–412, 425–445, 461–481, 488–508, and 539–559; these read TVKF…FMLW, HLVM…SYWS, VMSL…FAYI, MPII…AKVV, LPVV…MQSA, LVDG…ISMF, LGTV…LTSL, LCLL…PILM, ALSV…HLWS, WLLA…VSLA, and SVEF…LIFE. The segment at 621 to 659 adopts an RING-type; atypical zinc-finger fold; it reads CAICYQEMYSAKITRCRHFFHGVCLRKWLYVQDRCPLCH. Disordered regions lie at residues 696-724 and 752-788; these read NNAA…SSSA and VASS…TSAA. Over residues 711–724 the composition is skewed to low complexity; sequence EASEQAPATSSSSA.

Interacts with VHL. Interacts with the MPN domain of CSN5. Interacts with EIF3F and EIF3H.

It is found in the endoplasmic reticulum membrane. Plays a role in growth inhibition that is dependent upon COP9 signalosome subunits CSN5 and CSN6. May modulate signalosome levels or compartmentalization. Probably functions in the same or a related pathway to VHL during early midline development. This Drosophila melanogaster (Fruit fly) protein is Protein TRC8 homolog.